Here is a 527-residue protein sequence, read N- to C-terminus: MENQEKASIAGHMFDVVVIGGGISGLSAAKLLTEYGVSVLVLEARDRVGGRTYTIRNEHVDYVDVGGAYVGPTQNRILRLSKELGIETYKVNVSERLVQYVKGKTYPFRGAFPPVWNPIAYLDYNNLWRTIDNMGKEIPADAPWEAQHADEWDKMTMKELIDKICWTKTARRFAYLFVNINVTSEPHEVSALWFLWYVKQCGGTTRIFSVTNGGQERKFVGGSGQVSERIMDLLGDQVKLNHPVTHVDQSSNNIIIETLNHEHYECKYVINAIPPTLTAKIHFRPELPAERNQLIQRLPMGAIIKCMMYYKEAFWKKKDYCGCMIIEDEDAPISITLDDTKPDGSLPAIMGFILARKADRLAKLHKEIRKKKICELYAKVLGSQEALHPVHYEEKNWCEEQYSGGCYTAYFPPGIMTQYGRVIRQPVGRIFFAGTETATKWSGYMEGAVEAGERAAREVLNGLGKVTEKDIWVQEPESKDVPAVEITHTFWERNLPSVSGLLKIIGFSTSVTALGFVLYKYKLLPRS.

The residue at position 1 (methionine 1) is an N-acetylmethionine. Residues 1 to 497 (MENQEKASIA…HTFWERNLPS (497 aa)) lie on the Cytoplasmic side of the membrane. Serine 383 bears the Phosphoserine mark. Cysteine 406 is modified (S-8alpha-FAD cysteine). A helical; Anchor for type IV membrane protein transmembrane segment spans residues 498 to 518 (VSGLLKIIGFSTSVTALGFVL). Over 519-527 (YKYKLLPRS) the chain is Mitochondrial intermembrane. The tract at residues 520–522 (KYK) is interaction with membrane phospholipid headgroups.

This sequence belongs to the flavin monoamine oxidase family. Monomer, homo- or heterodimer (containing two subunits of similar size). Each subunit contains a covalently bound flavin. Enzymatically active as monomer. It depends on FAD as a cofactor.

It localises to the mitochondrion outer membrane. The enzyme catalyses a secondary aliphatic amine + O2 + H2O = a primary amine + an aldehyde + H2O2. The catalysed reaction is a primary methyl amine + O2 + H2O = an aldehyde + H2O2 + NH4(+). It catalyses the reaction (R)-adrenaline + O2 + H2O = (R)-3,4-dihydroxymandelaldehyde + methylamine + H2O2. It carries out the reaction dopamine + O2 + H2O = 3,4-dihydroxyphenylacetaldehyde + H2O2 + NH4(+). The enzyme catalyses tyramine + O2 + H2O = (4-hydroxyphenyl)acetaldehyde + H2O2 + NH4(+). The catalysed reaction is (R)-noradrenaline + O2 + H2O = (R)-3,4-dihydroxymandelaldehyde + H2O2 + NH4(+). It catalyses the reaction serotonin + O2 + H2O = (5-hydroxyindol-3-yl)acetaldehyde + H2O2 + NH4(+). It carries out the reaction kynuramine + O2 + H2O = 3-(2-aminophenyl)-3-oxopropanal + H2O2 + NH4(+). The enzyme catalyses tryptamine + O2 + H2O = indole-3-acetaldehyde + H2O2 + NH4(+). The catalysed reaction is 2-phenylethylamine + O2 + H2O = 2-phenylacetaldehyde + H2O2 + NH4(+). In terms of biological role, catalyzes the oxidative deamination of primary and some secondary amine such as neurotransmitters, with concomitant reduction of oxygen to hydrogen peroxide and has important functions in the metabolism of neuroactive and vasoactive amines in the central nervous system and peripheral tissues. Preferentially oxidizes serotonin. Also catalyzes the oxidative deamination of kynuramine to 3-(2-aminophenyl)-3-oxopropanal that can spontaneously condense to 4-hydroxyquinoline. The polypeptide is Amine oxidase [flavin-containing] A (Pongo abelii (Sumatran orangutan)).